The following is a 380-amino-acid chain: F-box/kelch-repeat protein At3g18720 (380 aa).

Residues 47–94 form the F-box domain; the sequence is LWDKQIPTDLLQEILSRLGLKANIHASLVCKTWLKEAVSVRKFQSRPW. Kelch repeat units follow at residues 190–233 and 234–279; these read CVIS…INRC and IFSN…LVRQ.

This is F-box/kelch-repeat protein At3g18720 from Arabidopsis thaliana (Mouse-ear cress).